The following is a 352-amino-acid chain: Uroporphyrinogen decarboxylase (352 aa).

Residues 26–30 (RQAGR), Asp76, Tyr153, Ser208, and His323 each bind substrate.

Belongs to the uroporphyrinogen decarboxylase family. In terms of assembly, homodimer.

The protein resides in the cytoplasm. It carries out the reaction uroporphyrinogen III + 4 H(+) = coproporphyrinogen III + 4 CO2. Its pathway is porphyrin-containing compound metabolism; protoporphyrin-IX biosynthesis; coproporphyrinogen-III from 5-aminolevulinate: step 4/4. In terms of biological role, catalyzes the decarboxylation of four acetate groups of uroporphyrinogen-III to yield coproporphyrinogen-III. This chain is Uroporphyrinogen decarboxylase, found in Prochlorococcus marinus (strain NATL1A).